Reading from the N-terminus, the 435-residue chain is Adenylosuccinate synthetase (435 aa).

GTP-binding positions include 11 to 17 (GDEGKGK) and 39 to 41 (GHT). The Proton acceptor role is filled by aspartate 12. Aspartate 12 and glycine 39 together coordinate Mg(2+). IMP is bound by residues 12-15 (DEGK), 37-40 (NAGH), threonine 128, arginine 142, glutamine 223, threonine 238, and arginine 302. Histidine 40 functions as the Proton donor in the catalytic mechanism. 298–304 (SVTGRPR) serves as a coordination point for substrate. Residues arginine 304, 330–332 (KLD), and 412–414 (STG) contribute to the GTP site.

Belongs to the adenylosuccinate synthetase family. Homodimer. It depends on Mg(2+) as a cofactor.

The protein resides in the cytoplasm. The enzyme catalyses IMP + L-aspartate + GTP = N(6)-(1,2-dicarboxyethyl)-AMP + GDP + phosphate + 2 H(+). The protein operates within purine metabolism; AMP biosynthesis via de novo pathway; AMP from IMP: step 1/2. Plays an important role in the de novo pathway of purine nucleotide biosynthesis. Catalyzes the first committed step in the biosynthesis of AMP from IMP. This chain is Adenylosuccinate synthetase, found in Coxiella burnetii (strain RSA 493 / Nine Mile phase I).